Here is a 686-residue protein sequence, read N- to C-terminus: Cation channel sperm-associated protein 1 (686 aa).

The span at 1–15 (MDQSSRRDESYHETH) shows a compositional bias: basic and acidic residues. 4 disordered regions span residues 1-57 (MDQS…QQPY), 97-177 (TLPN…NRDH), 207-271 (DHHH…KSTA), and 289-318 (QSRE…RAHK). Residues 1 to 351 (MDQSSRRDES…QMILSLTQSL (351 aa)) lie on the Cytoplasmic side of the membrane. The span at 25–35 (SHPHPHPHPTL) shows a compositional bias: basic residues. A compositionally biased stretch (basic and acidic residues) spans 128–142 (DPNHHPHQDDPHRPS). Over residues 147–160 (HPSSTGSHQGTTHQ) the composition is skewed to polar residues. Basic residues-rich tracts occupy residues 211–229 (EGHH…KEQR) and 235–244 (HMHHHIHHRS). Polar residues predominate over residues 245 to 271 (PSASQLSHKSHSTLATSPSHVGSKSTA). Basic residues predominate over residues 308-318 (QKRKKAQRAHK). Residues 352–373 (GFETFIFIVVCLNTVILVAQTF) form a helical membrane-spanning segment. Over 374–382 (TELEIRGEW) the chain is Extracellular. Residues 383–404 (YFMVLDSIFLSIYVLEAVLKLI) form a helical membrane-spanning segment. Topologically, residues 405–412 (ALGLEYFY) are cytoplasmic. A helical transmembrane segment spans residues 413–435 (DPWNNLDFFIMVMAVLDFVLLQI). Topologically, residues 436–446 (NSLSYSFYNHS) are extracellular. Residues 447–469 (LFRILKVFKSMRALRAIRVLRRL) traverse the membrane as a helical segment. At 470-487 (SILTSLHEVAGTLSGSLP) the chain is on the cytoplasmic side. A helical membrane pass occupies residues 488 to 510 (SITAILTLMFTCLFLFSVVLRAL). The Extracellular segment spans residues 511–521 (FQDSDPKRFQN). The helical; Pore-forming intramembrane region spans 522–534 (IFTTLFTLFTMLT). Residues 535 to 551 (LDDWSLIYIDNRAQGAW) are Extracellular-facing. Residues 552-577 (YIIPILMIYIVIQYFIFLNLVIAVLV) traverse the membrane as a helical segment. Residues 578–686 (DNFQMALLKG…FEAGDDDYGK (109 aa)) are Cytoplasmic-facing.

Belongs to the cation channel sperm-associated (TC 1.A.1.19) family. In terms of assembly, component of the CatSper complex or CatSpermasome composed of the core pore-forming members CATSPER1, CATSPER2, CATSPER3 and CATSPER4 as well as auxiliary members CATSPERB, CATSPERG2, CATSPERD, CATSPERE, CATSPERZ, C2CD6/CATSPERT, SLCO6C1, TMEM249, TMEM262 and EFCAB9. HSPA1 may be an additional auxiliary complex member. The core complex members CATSPER1, CATSPER2, CATSPER3 and CATSPER4 form a heterotetrameric channel. The auxiliary CATSPERB, CATSPERG2, CATSPERD and CATSPERE subunits form a pavilion-like structure over the pore which stabilizes the complex through interactions with CATSPER4, CATSPER3, CATSPER1 and CATSPER2 respectively. SLCO6C1 interacts with CATSPERE, and TMEM262/CATSPERH interacts with CATSPERB, further stabilizing the complex. C2CD6/CATSPERT interacts at least with CATSPERD and is required for targeting the CatSper complex in the flagellar membrane. Interacts with Ca(v)3.3/CACNA1I, leading to suppression of T-type calcium channel activity. As to expression, testis-specific.

It localises to the cell projection. It is found in the cilium. The protein localises to the flagellum membrane. The catalysed reaction is Ca(2+)(in) = Ca(2+)(out). Its activity is regulated as follows. Activated by intracellular alkalinization. In contrast to the human ortholog, not activated by progesterone. Pore-forming subunit of the CatSper complex, a sperm-specific voltage-gated calcium channel that plays a central role in sperm cell hyperactivation. Controls calcium entry to mediate the hyperactivated motility, a step needed for sperm motility which is essential late in the preparation of sperm for fertilization. The chain is Cation channel sperm-associated protein 1 (Catsper1) from Mus musculus (Mouse).